Consider the following 947-residue polypeptide: Glutamate receptor 2.8 (947 aa).

Positions 1 to 26 are cleaved as a signal peptide; sequence MNPKKNNNTFLSYFVCLFLLLEVGLG. At 27–577 the chain is on the extracellular side; sequence QNQISEIKVG…NTWVFLKPWG (551 aa). N-linked (GlcNAc...) asparagine glycosylation is found at Asn42, Asn118, Asn333, Asn341, Asn348, Asn420, Asn478, and Asn524. Residues 578–598 traverse the membrane as a helical segment; the sequence is LDLWVTTACFFVLIGFVVWLF. Residues 599–607 are Cytoplasmic-facing; sequence EHRVNTDFR. A helical membrane pass occupies residues 608-628; that stretch reads GPPHHQIGTSFWFSFSTMVFA. Residues 629–632 are Cytoplasmic-facing; that stretch reads HREK. The chain crosses the membrane as a helical span at residues 633 to 653; it reads VVSNLARFVVVVWCFVVLVLT. Topologically, residues 654–819 are extracellular; the sequence is QSYTANLTSF…NRLSLRSFWG (166 aa). N-linked (GlcNAc...) asparagine glycans are attached at residues Asn659, Asn704, Asn723, and Asn779. Residues 820–840 traverse the membrane as a helical segment; sequence LFLIAGIASFLALLIFVFLFL. At 841–947 the chain is on the cytoplasmic side; it reads YENRHTLCDD…ESDIECVVEQ (107 aa).

Belongs to the glutamate-gated ion channel (TC 1.A.10.1) family. In terms of assembly, may form heteromers. Expressed predominantly in leaves.

It localises to the membrane. Its function is as follows. Glutamate-gated receptor that probably acts as a non-selective cation channel. May be involved in light-signal transduction and calcium homeostasis via the regulation of calcium influx into cells. The polypeptide is Glutamate receptor 2.8 (GLR2.8) (Arabidopsis thaliana (Mouse-ear cress)).